The chain runs to 2130 residues: Bromodomain adjacent to zinc finger domain protein 2B (2130 aa).

7 disordered regions span residues 1–42 (MESG…TGAA), 82–118 (LFAP…SLNG), 151–293 (GGRK…QKQP), 491–518 (KTTG…PVSN), 543–633 (VDSD…SSIG), 756–790 (EGRR…GSTE), and 944–966 (RKKA…LNKE). The segment covering 8 to 33 (TSSSVSSTAAASSPVSSTPSVASAVS) has biased composition (low complexity). The span at 183 to 206 (ESSSNSDSDSGSSSDTSSEGISSS) shows a compositional bias: low complexity. Residues 207 to 234 (DSDDLEEDEEEEEDQSAEESEDDESDSE) show a composition bias toward acidic residues. Positions 250–270 (GVKDMKTDGQKAHEKSQEKRT) are enriched in basic and acidic residues. The segment covering 272-283 (QQIPLVSDSQTH) has biased composition (polar residues). Over residues 284 to 293 (SSFQSQQKQP) the composition is skewed to low complexity. Residues 492-505 (TTGNRTLVVPSTSP) show a composition bias toward polar residues. Residues 543 to 554 (VDSDAPSSKESD) show a composition bias toward basic and acidic residues. Positions 555-611 (DSNDDDDDDEDEDEDDEDDDSDDSQSESDSNSESDTDGSEDEDDEDDKDQDESDTDT) are enriched in acidic residues. The segment covering 623–633 (TGSSIKSSSIG) has biased composition (low complexity). The MBD domain maps to 687–762 (VTDERELRVP…RAMEGRRGRP (76 aa)). Over residues 756–775 (EGRRGRPPNPDRQHSREESR) the composition is skewed to basic and acidic residues. The stretch at 797–984 (AKLLRKLQAQ…ELEMAKELKK (188 aa)) forms a coiled coil. The 66-residue stretch at 1010-1075 (GSTFSDCLMI…VTAAVCDPGL (66 aa)) folds into the DDT domain. Disordered regions lie at residues 1186-1265 (TGKR…DQTV), 1431-1454 (SLCS…NLFS), 1499-1545 (VTHV…PFAM), and 1773-1795 (HKKH…ERKN). Residues 1220–1244 (SDYDDDDDDDSDDQADEDDEDEEDK) are compositionally biased toward acidic residues. Positions 1245 to 1254 (EDKKGKKAEV) are enriched in basic and acidic residues. The segment covering 1514–1526 (SHPPSKSPSPVPS) has biased composition (pro residues). A PHD-type zinc finger spans residues 1895 to 1945 (KVYCQICRKGDNEELLLLCDGCDKGCHTYCHRPKITTIPDGDWFCPACIAK). Residues 1957–2019 (QIKGKKSNEQ…KQENFTAIKK (63 aa)) are disordered. The segment covering 1991-2002 (GKTEPKKRKMDE) has biased composition (basic and acidic residues). Over residues 2004–2014 (VSVSQGKQENF) the composition is skewed to polar residues. Positions 2022–2126 (RDDSKDLAIC…KYFEKKWTEI (105 aa)) constitute a Bromo domain.

It belongs to the WAL family.

Its subcellular location is the nucleus. In terms of biological role, regulatory subunit of the ATP-dependent BRF-1 and BRF-5 ISWI chromatin remodeling complexes, which form ordered nucleosome arrays on chromatin and facilitate access to DNA during DNA-templated processes such as DNA replication, transcription, and repair. Both complexes regulate the spacing of nucleosomes along the chromatin and have the ability to slide mononucleosomes to the center of a DNA template. The BRF-1 ISWI chromatin remodeling complex has a lower ATP hydrolysis rate than the BRF-5 ISWI chromatin remodeling complex. Chromatin reader protein. Represses the expression of mitochondrial function-related genes, perhaps by transcriptional regulation. This is Bromodomain adjacent to zinc finger domain protein 2B (BAZ2B) from Gallus gallus (Chicken).